The following is a 331-amino-acid chain: Thiamine-monophosphate kinase (331 aa).

Residues Asp-43, Thr-59, Thr-60, and Asp-61 each contribute to the Mg(2+) site. Residue His-68 coordinates substrate. Residues Asp-90, Asp-138, and Asp-231 each coordinate Mg(2+). 137–138 is a binding site for ATP; that stretch reads GD. Ser-233 serves as a coordination point for ATP. Residue Asp-234 coordinates Mg(2+). Glu-284 and Trp-328 together coordinate substrate.

This sequence belongs to the thiamine-monophosphate kinase family.

It carries out the reaction thiamine phosphate + ATP = thiamine diphosphate + ADP. Its pathway is cofactor biosynthesis; thiamine diphosphate biosynthesis; thiamine diphosphate from thiamine phosphate: step 1/1. Functionally, catalyzes the ATP-dependent phosphorylation of thiamine-monophosphate (TMP) to form thiamine-pyrophosphate (TPP), the active form of vitamin B1. This chain is Thiamine-monophosphate kinase, found in Corynebacterium glutamicum (strain ATCC 13032 / DSM 20300 / JCM 1318 / BCRC 11384 / CCUG 27702 / LMG 3730 / NBRC 12168 / NCIMB 10025 / NRRL B-2784 / 534).